The following is a 215-amino-acid chain: FGFR1 oncogene partner 2 homolog (215 aa).

2 coiled-coil regions span residues 5-104 (IEKA…MSKY) and 161-185 (KEQE…ITRE). The disordered stretch occupies residues 194–215 (DASESTSLSALVTNSDLSLRKN). A compositionally biased stretch (polar residues) spans 197–215 (ESTSLSALVTNSDLSLRKN).

It belongs to the SIKE family.

It is found in the cytoplasm. May be involved in wound healing pathway. This Pongo abelii (Sumatran orangutan) protein is FGFR1 oncogene partner 2 homolog (FGFR1OP2).